The chain runs to 154 residues: Lipoprotein signal peptidase (154 aa).

Helical transmembrane passes span 52 to 72 (ILAG…IGIV) and 85 to 105 (LGVA…DRAV). Residues Asp-111 and Asp-129 contribute to the active site. Residues 124 to 144 (IFNIADSSLCVGVMLLFIQML) form a helical membrane-spanning segment.

This sequence belongs to the peptidase A8 family.

It is found in the cell membrane. The catalysed reaction is Release of signal peptides from bacterial membrane prolipoproteins. Hydrolyzes -Xaa-Yaa-Zaa-|-(S,diacylglyceryl)Cys-, in which Xaa is hydrophobic (preferably Leu), and Yaa (Ala or Ser) and Zaa (Gly or Ala) have small, neutral side chains.. It participates in protein modification; lipoprotein biosynthesis (signal peptide cleavage). This protein specifically catalyzes the removal of signal peptides from prolipoproteins. In Bacillus subtilis (strain 168), this protein is Lipoprotein signal peptidase.